Reading from the N-terminus, the 584-residue chain is Protein disulfide-isomerase-like protein of the testis (584 aa).

Positions 1 to 20 (MDLLWMPLLLVAACVSAVHS) are cleaved as a signal peptide. N58, N128, N160, and N340 each carry an N-linked (GlcNAc...) asparagine glycan. Positions 388–451 (LVKQLVGKNF…IAKIDVTAND (64 aa)) constitute a Thioredoxin domain. Residue N540 is glycosylated (N-linked (GlcNAc...) asparagine). The Prevents secretion from ER motif lies at 581–584 (KEEL).

The protein belongs to the protein disulfide isomerase family. In terms of assembly, homodimer. The homodimer is not disulfide-linked. Interacts with ERO1A and CLGN. Post-translationally, N-glycosylated. As to expression, testis-specific.

The protein localises to the endoplasmic reticulum. In terms of biological role, probable redox-inactive chaperone involved in spermatogenesis. This is Protein disulfide-isomerase-like protein of the testis (PDILT) from Homo sapiens (Human).